Reading from the N-terminus, the 235-residue chain is Carboxy-S-adenosyl-L-methionine synthase (235 aa).

Residues tyrosine 35, 60 to 62 (GCS), 83 to 84 (DN), asparagine 124, and arginine 191 contribute to the S-adenosyl-L-methionine site.

The protein belongs to the class I-like SAM-binding methyltransferase superfamily. Cx-SAM synthase family. In terms of assembly, homodimer.

The catalysed reaction is prephenate + S-adenosyl-L-methionine = carboxy-S-adenosyl-L-methionine + 3-phenylpyruvate + H2O. Its function is as follows. Catalyzes the conversion of S-adenosyl-L-methionine (SAM) to carboxy-S-adenosyl-L-methionine (Cx-SAM). The protein is Carboxy-S-adenosyl-L-methionine synthase of Campylobacter jejuni subsp. doylei (strain ATCC BAA-1458 / RM4099 / 269.97).